The following is a 199-amino-acid chain: Protein-methionine-sulfoxide reductase heme-binding subunit MsrQ (199 aa).

A run of 4 helical transmembrane segments spans residues Ile8 to Trp28, Leu82 to Ile102, Pro116 to Thr136, and Val153 to Ser173.

Belongs to the MsrQ family. Heterodimer of a catalytic subunit (MsrP) and a heme-binding subunit (MsrQ). FMN serves as cofactor. The cofactor is heme b.

The protein resides in the cell inner membrane. Its function is as follows. Part of the MsrPQ system that repairs oxidized periplasmic proteins containing methionine sulfoxide residues (Met-O), using respiratory chain electrons. Thus protects these proteins from oxidative-stress damage caused by reactive species of oxygen and chlorine generated by the host defense mechanisms. MsrPQ is essential for the maintenance of envelope integrity under bleach stress, rescuing a wide series of structurally unrelated periplasmic proteins from methionine oxidation, including the primary periplasmic chaperone SurA and the lipoprotein Pal. MsrQ provides electrons for reduction to the reductase catalytic subunit MsrP, using the quinone pool of the respiratory chain. This Salmonella arizonae (strain ATCC BAA-731 / CDC346-86 / RSK2980) protein is Protein-methionine-sulfoxide reductase heme-binding subunit MsrQ.